A 917-amino-acid polypeptide reads, in one-letter code: Phosphoenolpyruvate carboxylase (917 aa).

Active-site residues include His145 and Lys578.

Belongs to the PEPCase type 1 family. Mg(2+) is required as a cofactor.

It catalyses the reaction oxaloacetate + phosphate = phosphoenolpyruvate + hydrogencarbonate. Functionally, forms oxaloacetate, a four-carbon dicarboxylic acid source for the tricarboxylic acid cycle. The sequence is that of Phosphoenolpyruvate carboxylase from Azoarcus sp. (strain BH72).